Here is a 491-residue protein sequence, read N- to C-terminus: UDP-N-acetylmuramoyl-L-alanyl-D-glutamate--2,6-diaminopimelate ligase (491 aa).

Ser30 is a binding site for UDP-N-acetyl-alpha-D-muramoyl-L-alanyl-D-glutamate. Position 108–114 (108–114 (GTNGKTT)) interacts with ATP. UDP-N-acetyl-alpha-D-muramoyl-L-alanyl-D-glutamate contacts are provided by residues Asn149, 150-151 (TT), Ser177, Gln183, and Arg185. At Lys217 the chain carries N6-carboxylysine. Residues Arg383, 407 to 410 (DNPR), Gly458, and Glu462 contribute to the meso-2,6-diaminopimelate site. The short motif at 407–410 (DNPR) is the Meso-diaminopimelate recognition motif element.

The protein belongs to the MurCDEF family. MurE subfamily. Requires Mg(2+) as cofactor. In terms of processing, carboxylation is probably crucial for Mg(2+) binding and, consequently, for the gamma-phosphate positioning of ATP.

It localises to the cytoplasm. The enzyme catalyses UDP-N-acetyl-alpha-D-muramoyl-L-alanyl-D-glutamate + meso-2,6-diaminopimelate + ATP = UDP-N-acetyl-alpha-D-muramoyl-L-alanyl-gamma-D-glutamyl-meso-2,6-diaminopimelate + ADP + phosphate + H(+). It functions in the pathway cell wall biogenesis; peptidoglycan biosynthesis. Its function is as follows. Catalyzes the addition of meso-diaminopimelic acid to the nucleotide precursor UDP-N-acetylmuramoyl-L-alanyl-D-glutamate (UMAG) in the biosynthesis of bacterial cell-wall peptidoglycan. The chain is UDP-N-acetylmuramoyl-L-alanyl-D-glutamate--2,6-diaminopimelate ligase from Listeria monocytogenes serovar 1/2a (strain ATCC BAA-679 / EGD-e).